The sequence spans 240 residues: Pyridoxine 5'-phosphate synthase (240 aa).

A 3-amino-2-oxopropyl phosphate-binding site is contributed by N7. 1-deoxy-D-xylulose 5-phosphate is bound at residue 9-10 (DH). 3-amino-2-oxopropyl phosphate is bound at residue R18. H43 functions as the Proton acceptor in the catalytic mechanism. 1-deoxy-D-xylulose 5-phosphate-binding residues include R45 and H50. Catalysis depends on E70, which acts as the Proton acceptor. Residue T100 participates in 1-deoxy-D-xylulose 5-phosphate binding. Residue H191 is the Proton donor of the active site. Residues G192 and 213–214 (GH) each bind 3-amino-2-oxopropyl phosphate.

It belongs to the PNP synthase family. As to quaternary structure, homooctamer; tetramer of dimers.

Its subcellular location is the cytoplasm. The catalysed reaction is 3-amino-2-oxopropyl phosphate + 1-deoxy-D-xylulose 5-phosphate = pyridoxine 5'-phosphate + phosphate + 2 H2O + H(+). The protein operates within cofactor biosynthesis; pyridoxine 5'-phosphate biosynthesis; pyridoxine 5'-phosphate from D-erythrose 4-phosphate: step 5/5. In terms of biological role, catalyzes the complicated ring closure reaction between the two acyclic compounds 1-deoxy-D-xylulose-5-phosphate (DXP) and 3-amino-2-oxopropyl phosphate (1-amino-acetone-3-phosphate or AAP) to form pyridoxine 5'-phosphate (PNP) and inorganic phosphate. This chain is Pyridoxine 5'-phosphate synthase, found in Crocosphaera subtropica (strain ATCC 51142 / BH68) (Cyanothece sp. (strain ATCC 51142)).